The sequence spans 102 residues: NADH-quinone oxidoreductase subunit K (102 aa).

3 helical membrane-spanning segments follow: residues 5–25 (LGHYLSLGAMLFALSVIGIFL), 31–51 (IVLLMAIELMLLAVNLNFVAF), and 62–82 (VFVFFILTVAAAESAIGLAIL).

Belongs to the complex I subunit 4L family. NDH-1 is composed of 14 different subunits. Subunits NuoA, H, J, K, L, M, N constitute the membrane sector of the complex.

It is found in the cell inner membrane. The enzyme catalyses a quinone + NADH + 5 H(+)(in) = a quinol + NAD(+) + 4 H(+)(out). Functionally, NDH-1 shuttles electrons from NADH, via FMN and iron-sulfur (Fe-S) centers, to quinones in the respiratory chain. The immediate electron acceptor for the enzyme in this species is believed to be ubiquinone. Couples the redox reaction to proton translocation (for every two electrons transferred, four hydrogen ions are translocated across the cytoplasmic membrane), and thus conserves the redox energy in a proton gradient. This Methylibium petroleiphilum (strain ATCC BAA-1232 / LMG 22953 / PM1) protein is NADH-quinone oxidoreductase subunit K.